The primary structure comprises 523 residues: MSQQVIIFDTTLRDGEQALQASLSVKEKLQIALALERMGVDVMEVGFPVSSPGDFESVQTIARQVKNSRVCALARCVEKDIDVAAESLKVAEAFRIHTFIATSPMHIATKLRSTLDEVIERAIYMVKRARNYTDDVEFSCEDAGRTPIADLARVVEAAINAGATTINIPDTVGYTMPFEFAGIISGLYERVPNIGKAIISVHTHDDLGLAVGNSLAAVHAGARQVEGAMNGIGERAGNCSLEEVIMAIKVRKDILNVHTAINHQEIWRTSQLVSQICNMPIPANKAIVGSGAFAHSSGIHQDGVLKNRENYEIMTPESIGLNQIQLNLTSRSGRAAVKHRMDEMGYKESEYNLDNLYDAFLKLADKKGQVFDYDLEALAFIGKQQEEPEHFRLDYFSVQSGSNDIATAAVKLACGEEVKAEAANGNGPVDAVYQAINRITDYNVELVKYSLTAKGHGKDALGQVDIVANYNGRRFHGVGLATDIVESSAKAMVHVLNNIWRAAEVEKELQRKAQHNENNKETV.

The Pyruvate carboxyltransferase domain occupies 5–267 (VIIFDTTLRD…HTAINHQEIW (263 aa)). Positions 14, 202, 204, and 238 each coordinate Mn(2+). The segment at 392–523 (RLDYFSVQSG…QHNENNKETV (132 aa)) is regulatory domain.

It belongs to the alpha-IPM synthase/homocitrate synthase family. LeuA type 1 subfamily. In terms of assembly, homodimer. Requires Mn(2+) as cofactor.

It is found in the cytoplasm. It carries out the reaction 3-methyl-2-oxobutanoate + acetyl-CoA + H2O = (2S)-2-isopropylmalate + CoA + H(+). It functions in the pathway amino-acid biosynthesis; L-leucine biosynthesis; L-leucine from 3-methyl-2-oxobutanoate: step 1/4. In terms of biological role, catalyzes the condensation of the acetyl group of acetyl-CoA with 3-methyl-2-oxobutanoate (2-ketoisovalerate) to form 3-carboxy-3-hydroxy-4-methylpentanoate (2-isopropylmalate). The chain is 2-isopropylmalate synthase from Shigella flexneri serotype 5b (strain 8401).